A 210-amino-acid polypeptide reads, in one-letter code: Neurotrophin-4 (210 aa).

A signal peptide spans 1 to 24 (MLPLPSCSLPILLLFLLPSVPIES). Positions 25-80 (QPPPSTLPPFLAPEWDLLSPRVVLSRGAPAGPPLLFLLEAGAFRESAGAPANRSRR) are excised as a propeptide. N-linked (GlcNAc...) asparagine glycosylation occurs at N76. 3 cysteine pairs are disulfide-bonded: C97-C170, C141-C199, and C158-C201.

It belongs to the NGF-beta family. In terms of tissue distribution, highest levels in prostate, lower levels in thymus, placenta, and skeletal muscle. Expressed in embryonic and adult tissues.

Its subcellular location is the secreted. Functionally, target-derived survival factor for peripheral sensory sympathetic neurons. May promote ameloblast differentiation and subsequent reduction in proliferation of ameloblasts. In Homo sapiens (Human), this protein is Neurotrophin-4 (NTF4).